The following is a 700-amino-acid chain: Chaperonin CPN60, mitochondrial (700 aa).

A mitochondrion-targeting transit peptide spans 1–9 (MRMKRIHIL). A disordered region spans residues 636-700 (TYKHKLHDDE…SMNDEYNYDE (65 aa)). Over residues 644-700 (DEDTDEDDEEDEDDEDDEDDLDDDDYDDEDEEDEEDEEDEDDEDDEDSMNDEYNYDE) the composition is skewed to acidic residues.

It belongs to the chaperonin (HSP60) family.

The protein localises to the mitochondrion matrix. In terms of biological role, implicated in mitochondrial protein import and macromolecular assembly. May facilitate the correct folding of imported proteins. May also prevent misfolding and promote the refolding and proper assembly of unfolded polypeptides generated under stress conditions in the mitochondrial matrix. The sequence is that of Chaperonin CPN60, mitochondrial from Plasmodium falciparum (isolate FCR-3 / Gambia).